We begin with the raw amino-acid sequence, 488 residues long: Glutamyl-tRNA(Gln) amidotransferase subunit A (488 aa).

Active-site charge relay system residues include K77 and S152. S176 serves as the catalytic Acyl-ester intermediate.

This sequence belongs to the amidase family. GatA subfamily. Heterotrimer of A, B and C subunits.

It carries out the reaction L-glutamyl-tRNA(Gln) + L-glutamine + ATP + H2O = L-glutaminyl-tRNA(Gln) + L-glutamate + ADP + phosphate + H(+). Its function is as follows. Allows the formation of correctly charged Gln-tRNA(Gln) through the transamidation of misacylated Glu-tRNA(Gln) in organisms which lack glutaminyl-tRNA synthetase. The reaction takes place in the presence of glutamine and ATP through an activated gamma-phospho-Glu-tRNA(Gln). The polypeptide is Glutamyl-tRNA(Gln) amidotransferase subunit A (Streptococcus pyogenes serotype M49 (strain NZ131)).